The following is a 683-amino-acid chain: DNA polymerase alpha-associated DNA helicase A (683 aa).

Residue Gly229–Thr236 participates in ATP binding.

Belongs to the DNA2/NAM7 helicase family. In terms of assembly, associates with the hexameric DNA polymerase alpha.

It is found in the cytoplasm. The protein localises to the nucleus. The catalysed reaction is ATP + H2O = ADP + phosphate + H(+). DNA polymerase alpha-associated DNA helicase which may be involved in DNA replication. This Saccharomyces cerevisiae (strain ATCC 204508 / S288c) (Baker's yeast) protein is DNA polymerase alpha-associated DNA helicase A (HCS1).